The chain runs to 204 residues: Guanylate kinase (204 aa).

The Guanylate kinase-like domain maps to 18–196 (PKLFTISAPA…SYEILKSIFI (179 aa)). 25–32 (APAGAGKT) is a binding site for ATP.

Belongs to the guanylate kinase family.

The protein resides in the cytoplasm. The catalysed reaction is GMP + ATP = GDP + ADP. Its function is as follows. Essential for recycling GMP and indirectly, cGMP. The chain is Guanylate kinase from Chlamydia caviae (strain ATCC VR-813 / DSM 19441 / 03DC25 / GPIC) (Chlamydophila caviae).